The primary structure comprises 812 residues: Probable inorganic carbon transporter subunit DabA (812 aa).

4 residues coordinate Zn(2+): C339, D341, H501, and C516.

The protein belongs to the inorganic carbon transporter (TC 9.A.2) DabA family. As to quaternary structure, forms a complex with DabB. Zn(2+) serves as cofactor.

It localises to the cell inner membrane. Its function is as follows. Part of an energy-coupled inorganic carbon pump. This is Probable inorganic carbon transporter subunit DabA from Xanthomonas axonopodis pv. citri (strain 306).